We begin with the raw amino-acid sequence, 326 residues long: Vitamin B12 import system permease protein BtuC (326 aa).

A run of 9 helical transmembrane segments spans residues 15–35, 61–81, 88–108, 112–132, 146–166, 184–204, 240–260, 274–294, and 302–322; these read WLLSLSLLVLLATLLSLCAGE, LAVLLVGAALALSGAVMQALF, PGLLGVSNGAGVGLIAAVLLG, LPGWALGLCAIAGALIITLIL, LLAGVALGIICSALMTWAIYF, GGVDWQQSWLMIALIPVLIWI, GWMVGVSVAMAGAIGFIGLVI, VLLPGCALAGAIALLLADVVA, and ELPIGVVTATLGAPVFIWLLL.

Belongs to the binding-protein-dependent transport system permease family. FecCD subfamily. In terms of assembly, the complex is composed of two ATP-binding proteins (BtuD), two transmembrane proteins (BtuC) and a solute-binding protein (BtuF).

It is found in the cell inner membrane. In terms of biological role, part of the ABC transporter complex BtuCDF involved in vitamin B12 import. Involved in the translocation of the substrate across the membrane. The polypeptide is Vitamin B12 import system permease protein BtuC (Salmonella choleraesuis (strain SC-B67)).